Here is a 284-residue protein sequence, read N- to C-terminus: MEMO1 family protein Mevan_0697 (284 aa).

It belongs to the MEMO1 family.

This is MEMO1 family protein Mevan_0697 from Methanococcus vannielii (strain ATCC 35089 / DSM 1224 / JCM 13029 / OCM 148 / SB).